A 154-amino-acid chain; its full sequence is tRNA (cytidine(34)-2'-O)-methyltransferase (154 aa).

L78, G100, I122, and S130 together coordinate S-adenosyl-L-methionine.

This sequence belongs to the class IV-like SAM-binding methyltransferase superfamily. RNA methyltransferase TrmH family. TrmL subfamily. Homodimer.

The protein resides in the cytoplasm. The enzyme catalyses cytidine(34) in tRNA + S-adenosyl-L-methionine = 2'-O-methylcytidine(34) in tRNA + S-adenosyl-L-homocysteine + H(+). It catalyses the reaction 5-carboxymethylaminomethyluridine(34) in tRNA(Leu) + S-adenosyl-L-methionine = 5-carboxymethylaminomethyl-2'-O-methyluridine(34) in tRNA(Leu) + S-adenosyl-L-homocysteine + H(+). Its function is as follows. Methylates the ribose at the nucleotide 34 wobble position in the two leucyl isoacceptors tRNA(Leu)(CmAA) and tRNA(Leu)(cmnm5UmAA). Catalyzes the methyl transfer from S-adenosyl-L-methionine to the 2'-OH of the wobble nucleotide. The polypeptide is tRNA (cytidine(34)-2'-O)-methyltransferase (Saccharophagus degradans (strain 2-40 / ATCC 43961 / DSM 17024)).